The primary structure comprises 133 residues: MKDWLDEIHWNADGLVPAIAQDHRTGRILMMAWMNRESLALTVRENRAIYWSRSRGKLWRKGEESGHVQKVHELRLDCDADVIILQVEQLGGIACHTGRESCFYRVFEDGAWKVVDPILKDPDAIYRAGHPHE.

Position 77 (D77) interacts with Mg(2+). Zn(2+) is bound at residue C78. The Mg(2+) site is built by D79 and D81. Residues C95 and C102 each contribute to the Zn(2+) site.

It belongs to the PRA-CH family. In terms of assembly, homodimer. Mg(2+) serves as cofactor. Zn(2+) is required as a cofactor.

The protein resides in the cytoplasm. It catalyses the reaction 1-(5-phospho-beta-D-ribosyl)-5'-AMP + H2O = 1-(5-phospho-beta-D-ribosyl)-5-[(5-phospho-beta-D-ribosylamino)methylideneamino]imidazole-4-carboxamide. It participates in amino-acid biosynthesis; L-histidine biosynthesis; L-histidine from 5-phospho-alpha-D-ribose 1-diphosphate: step 3/9. Catalyzes the hydrolysis of the adenine ring of phosphoribosyl-AMP. The polypeptide is Phosphoribosyl-AMP cyclohydrolase (Azotobacter vinelandii (strain DJ / ATCC BAA-1303)).